Consider the following 357-residue polypeptide: Probable RNA methyltransferase Daro_1157 (357 aa).

The active-site Proton acceptor is Glu91. In terms of domain architecture, Radical SAM core spans 94-320; it reads LLPRDGLCIS…TTVRNSAGQD (227 aa). Cys101 and Cys325 are joined by a disulfide. [4Fe-4S] cluster-binding residues include Cys108, Cys112, and Cys115. Residues 153-154, Ser183, 206-208, and Asn282 each bind S-adenosyl-L-methionine; these read GE and SLH. Cys325 functions as the S-methylcysteine intermediate in the catalytic mechanism.

Belongs to the radical SAM superfamily. RlmN family. It depends on [4Fe-4S] cluster as a cofactor.

The protein localises to the cytoplasm. This chain is Probable RNA methyltransferase Daro_1157, found in Dechloromonas aromatica (strain RCB).